The following is a 350-amino-acid chain: Decarboxylase iboD (350 aa).

It belongs to the phosphatidylserine decarboxylase family.

It functions in the pathway secondary metabolite biosynthesis. In terms of biological role, decarboxylase; part of the gene cluster that mediates the biosynthesis of the psychoactive metabolites ibotenic acid and muscimol. The first committed step is glutamate hydroxylation by the 2-oxoglutarate-dependent dioxygenase iboH, and the last step is decarboxylation of ibotenic acid to muscimol by the decarboxylase iboD. The order of the intermediate reactions is somewhat ambiguous. IboA likely activates the carboxylic acid at position 5 to introduce an amide bond, and the flavin monooxygenase iboF generates the N-O bond. There are several options for the latter step. One option is that iboF directly hydroxylates the amide nitrogen formed by iboA to produce a hydroxamic acid species. Another option is that iboF hydroxylates an external N-containing compound, whose resulting N-O bond is subsequently introduced into the hydroxyglutamate scaffold. The paralogous PLP-dependent cystathionine gamma-synthase-like enzymes iboG1 and iboG2 are likely involved in substitution of the OH group at position 3 by the O-N moiety. The first cyclic intermediate is most probably tricholomic acid which is likely desaturated to ibotenic acid by the cytochrome P450 monooxygenase iboC. The chain is Decarboxylase iboD from Amanita muscaria (strain Koide BX008).